A 310-amino-acid polypeptide reads, in one-letter code: 2-phospho-L-lactate transferase (310 aa).

The 7,8-didemethyl-8-hydroxy-5-deazariboflavin site is built by Asp50 and Arg89.

It belongs to the CofD family. In terms of assembly, homodimer. Mg(2+) is required as a cofactor.

It catalyses the reaction (2S)-lactyl-2-diphospho-5'-guanosine + 7,8-didemethyl-8-hydroxy-5-deazariboflavin = oxidized coenzyme F420-0 + GMP + H(+). The protein operates within cofactor biosynthesis; coenzyme F420 biosynthesis. Its function is as follows. Catalyzes the transfer of the 2-phospholactate moiety from (2S)-lactyl-2-diphospho-5'-guanosine to 7,8-didemethyl-8-hydroxy-5-deazariboflavin (FO) with the formation of oxidized coenzyme F420-0 and GMP. The protein is 2-phospho-L-lactate transferase of Methanopyrus kandleri (strain AV19 / DSM 6324 / JCM 9639 / NBRC 100938).